The following is a 529-amino-acid chain: E3 ubiquitin-protein ligase arih1 (529 aa).

2 disordered regions span residues Met1–Glu29 and Glu46–Glu69. Over residues Cys51 to Gly64 the composition is skewed to gly residues. Residues Thr77 to Asn125 form a UBA-like region. The segment at Leu154–Asn365 is TRIAD supradomain. Cys158, Cys161, Cys175, His177, Cys180, Cys183, Cys203, Cys208, Cys248, Cys253, Cys269, Cys271, Cys276, Cys279, His284, Cys289, Cys316, and Cys319 together coordinate Zn(2+). Residues Cys158–Cys208 form an RING-type 1 zinc finger. Residues Leu228–Cys289 form an IBR-type zinc finger. The RING-type 2; atypical zinc-finger motif lies at Cys316–Cys347. Cys329 is an active-site residue. Residues Cys334, Cys339, Cys344, Cys347, His354, and Cys361 each coordinate Zn(2+). The interval Arg380–Asp529 is ariadne domain.

The protein belongs to the RBR family. Ariadne subfamily. Interacts (via the first RING-type zinc finger) with ube2l3. Associates with cullin-RING ubiquitin ligase (CRL) complexes containing neddylated cullin.

The protein resides in the cytoplasm. It is found in the nucleus. The enzyme catalyses [E2 ubiquitin-conjugating enzyme]-S-ubiquitinyl-L-cysteine + [acceptor protein]-L-lysine = [E2 ubiquitin-conjugating enzyme]-L-cysteine + [acceptor protein]-N(6)-ubiquitinyl-L-lysine.. It functions in the pathway protein modification; protein ubiquitination. Autoinhibited by the ariadne domain, which masks the second RING-type zinc finger that contains the active site and inhibits the E3 activity. Inhibition is relieved upon binding to neddylated cullin-RING ubiquitin ligase complexes, which activate the E3 ligase activity of ARIH1. In terms of biological role, E3 ubiquitin-protein ligase, which catalyzes ubiquitination of target proteins together with ubiquitin-conjugating enzyme E2 ube2l3. Acts as an atypical E3 ubiquitin-protein ligase by working together with cullin-RING ubiquitin ligase (CRL) complexes and initiating ubiquitination of CRL substrates: associates with CRL complexes and specifically mediates addition of the first ubiquitin on CRLs targets. The initial ubiquitin is then elongated. E3 ubiquitin-protein ligase activity is activated upon binding to neddylated cullin-RING ubiquitin ligase complexes. The sequence is that of E3 ubiquitin-protein ligase arih1 (arih1) from Xenopus laevis (African clawed frog).